An 885-amino-acid chain; its full sequence is Ankyrin repeat and SAM domain-containing protein 6 (885 aa).

10 ANK repeats span residues 8–37 (PGLQLLLRACEQGDTDTARRLLEPGGEPVA), 68–97 (AGNSALQLAAAGGHEPLVRFLLRRGASVNS), 101–130 (YGWSALMQAARCGHASVAHLLLDHGADVNA), 134–163 (LGASVLTVASRGGHLGVVKLLLEAGATVDH), 181–210 (LGITALMAAVQHGHEAVVRLLMEWGADPNH), 215–244 (VGWSPLMLAALLGKLSVVQQLVEKGANPDH), 282–312 (KRRPDIFHALKMGNFQLVKEIADEDPNHVNL), 316–345 (DGATPLMLAAVTGQLPLVQLLVEKHADMNK), 350–379 (HGWTALMQATYHGNKEIVKYLLNQGADVTL), and 383–414 (NGYTAFDLVMLLNDPDTELVRLLASVCMQVNK). Asparagine 129 is subject to 3-hydroxyasparagine. Disordered stretches follow at residues 415-439 (DRGGRPSHRPPLPHSKARQPWSIPM), 491-522 (MRAPPQDRTNHLGPPEAAHAAKDSGPGNPRRE), 563-775 (SSDR…ITDE), and 855-885 (FESSASNTRAPGNSPCMAGWVRPEETVSSRR). Over residues 608 to 640 (PSISRSPTSPASSGNFNHSPHSSGGASGVGSMS) the composition is skewed to low complexity. Position 650 is a phosphoserine (serine 650). The span at 650–662 (SGGSVDSVLSQIA) shows a compositional bias: polar residues. 2 stretches are compositionally biased toward low complexity: residues 689–713 (GSSPPELPASLLGSGSGSSNVTSSS) and 722–739 (PPSGTSATSKSTSPTLTP). A phosphoserine mark is found at serine 734 and serine 742. The segment covering 750–770 (SSVSSSSSHRQSKSSGGSSSG) has biased composition (low complexity). The SAM domain maps to 773-836 (TDEDELTGIL…LAAISELNAG (64 aa)). Residues 855–865 (FESSASNTRAP) show a composition bias toward polar residues. Positions 876-885 (RPEETVSSRR) are enriched in basic and acidic residues.

Homooligomer. Interacts with NEK8. Central component of a complex containing at least ANKS6, INVS, NEK8 and NPHP3. ANKS6 may organize complex assembly by linking INVS and NPHP3 to NEK8 and INVS may target the complex to the proximal ciliary axoneme. Interacts (via SAM domain) with BICC1 (via KH domains) in an RNA-dependent manner. Interacts (via SAM domain) with ANKS3 (via SAM domain). In terms of processing, hydroxylated at Asn-129, most probably by HIF1AN. This hydroxylation results in decreased NEK8-binding. Widely expressed with moderate level in brain, skeletal muscle and testis. Expressed in renal tubules.

The protein localises to the cell projection. It is found in the cilium. The protein resides in the cytoplasm. Required for renal function. The polypeptide is Ankyrin repeat and SAM domain-containing protein 6 (Anks6) (Rattus norvegicus (Rat)).